The following is a 338-amino-acid chain: Ketol-acid reductoisomerase (NADP(+)) (338 aa).

The KARI N-terminal Rossmann domain occupies 1–181 (MKVFYDKDAD…GGGRAGIIET (181 aa)). NADP(+)-binding positions include 24–27 (YGSQ), Arg47, and Ser52. The active site involves His107. Residue Gly133 coordinates NADP(+). Residues 182 to 327 (NFREETETDL…AKLRAMMPWI (146 aa)) form the KARI C-terminal knotted domain. Mg(2+) contacts are provided by Asp190, Glu194, Glu226, and Glu230. Ser251 lines the substrate pocket.

This sequence belongs to the ketol-acid reductoisomerase family. It depends on Mg(2+) as a cofactor.

The catalysed reaction is (2R)-2,3-dihydroxy-3-methylbutanoate + NADP(+) = (2S)-2-acetolactate + NADPH + H(+). It catalyses the reaction (2R,3R)-2,3-dihydroxy-3-methylpentanoate + NADP(+) = (S)-2-ethyl-2-hydroxy-3-oxobutanoate + NADPH + H(+). It participates in amino-acid biosynthesis; L-isoleucine biosynthesis; L-isoleucine from 2-oxobutanoate: step 2/4. Its pathway is amino-acid biosynthesis; L-valine biosynthesis; L-valine from pyruvate: step 2/4. Functionally, involved in the biosynthesis of branched-chain amino acids (BCAA). Catalyzes an alkyl-migration followed by a ketol-acid reduction of (S)-2-acetolactate (S2AL) to yield (R)-2,3-dihydroxy-isovalerate. In the isomerase reaction, S2AL is rearranged via a Mg-dependent methyl migration to produce 3-hydroxy-3-methyl-2-ketobutyrate (HMKB). In the reductase reaction, this 2-ketoacid undergoes a metal-dependent reduction by NADPH to yield (R)-2,3-dihydroxy-isovalerate. This Polynucleobacter necessarius subsp. necessarius (strain STIR1) protein is Ketol-acid reductoisomerase (NADP(+)).